The primary structure comprises 601 residues: CDPK-related kinase 5 (601 aa).

A compositionally biased stretch (polar residues) spans 1-19; that stretch reads MGLCTSKPNSSNSDQTPAR. 2 disordered regions span residues 1–55 and 70–98; these read MGLC…KSPF and KKTP…PPPS. A lipid anchor (N-myristoyl glycine) is attached at Gly-2. Low complexity predominate over residues 26–35; it reads SESVKPSSSS. Polar residues predominate over residues 36–48; it reads VNGEDQCVTTTNN. Residues 148 to 410 form the Protein kinase domain; that stretch reads YELGDEVGRG…AAQALSHPWI (263 aa). Residues 154–162 and Lys-180 each bind ATP; that span reads VGRGHFGYT. The active-site Proton acceptor is Asp-276. Ser-316 is subject to Phosphoserine. The autoinhibitory domain stretch occupies residues 415–445; that stretch reads DAKVPMDILVFKLMRAYLRSSSLRKAALRAL. The interval 434–454 is calmodulin binding (CaMBD); sequence SSSLRKAALRALSKTLTVDEL. 4 EF-hand domains span residues 452–488, 489–524, 525–564, and 567–596; these read DELF…ATDA, MKDS…VHQL, EALD…GPSV, and HAVL…VSSR. Positions 467, 469, 471, 476, 508, 513, 546, 553, 578, and 580 each coordinate Ca(2+). Residue Ser-582 is modified to Phosphoserine.

This sequence belongs to the protein kinase superfamily. Ser/Thr protein kinase family. CDPK subfamily. In terms of assembly, binds calmodulin (CaM) in a calcium-dependent manner.

It is found in the membrane. The enzyme catalyses L-seryl-[protein] + ATP = O-phospho-L-seryl-[protein] + ADP + H(+). It carries out the reaction L-threonyl-[protein] + ATP = O-phospho-L-threonyl-[protein] + ADP + H(+). With respect to regulation, activated by calcium and calmodulin. Autophosphorylation may play an important role in the regulation of the kinase activity. In terms of biological role, may play a role in signal transduction pathways that involve calcium as a second messenger. This is CDPK-related kinase 5 (CRK5) from Arabidopsis thaliana (Mouse-ear cress).